Consider the following 354-residue polypeptide: DNA integrity scanning protein DisA (354 aa).

The region spanning 6 to 144 (GMKIKDTLKI…GDIKYVLRDS (139 aa)) is the DAC domain. Residues glycine 73, leucine 91, and 104-108 (TRHRT) contribute to the ATP site.

This sequence belongs to the DisA family. Homooctamer. Mg(2+) serves as cofactor.

It catalyses the reaction 2 ATP = 3',3'-c-di-AMP + 2 diphosphate. Its function is as follows. Participates in a DNA-damage check-point that is active prior to asymmetric division when DNA is damaged. DisA forms globular foci that rapidly scan along the chromosomes during sporulation, searching for lesions. When a lesion is present, DisA pauses at the lesion site. This triggers a cellular response that culminates in a temporary block in sporulation initiation. In terms of biological role, also has diadenylate cyclase activity, catalyzing the condensation of 2 ATP molecules into cyclic di-AMP (c-di-AMP). c-di-AMP acts as a signaling molecule that couples DNA integrity with progression of sporulation. The rise in c-di-AMP level generated by DisA while scanning the chromosome, operates as a positive signal that advances sporulation; upon encountering a lesion, the DisA focus arrests at the damaged site and halts c-di-AMP synthesis. The chain is DNA integrity scanning protein DisA from Clostridium botulinum (strain Alaska E43 / Type E3).